A 214-amino-acid polypeptide reads, in one-letter code: MITLALSKGRIFEETLPLLAAAGIEVTEDPEKSRKLILPTNRADMQVVMVRATDVPTYVQYGGADLGVAGKDILIEHGGEGLYQPIDLRIARCRMSVATRADFDYDSAVKKGSRIRVATKYTAIARQHFADKGVHVDLIKLYGSMELAPLTGLADAIVDLVSTGSTLKANHLREVEPFMEISSRLVVNQAALKLKRERLRPLIDAIAAAVAARG.

The protein belongs to the ATP phosphoribosyltransferase family. Short subfamily. As to quaternary structure, heteromultimer composed of HisG and HisZ subunits.

Its subcellular location is the cytoplasm. It carries out the reaction 1-(5-phospho-beta-D-ribosyl)-ATP + diphosphate = 5-phospho-alpha-D-ribose 1-diphosphate + ATP. It functions in the pathway amino-acid biosynthesis; L-histidine biosynthesis; L-histidine from 5-phospho-alpha-D-ribose 1-diphosphate: step 1/9. Functionally, catalyzes the condensation of ATP and 5-phosphoribose 1-diphosphate to form N'-(5'-phosphoribosyl)-ATP (PR-ATP). Has a crucial role in the pathway because the rate of histidine biosynthesis seems to be controlled primarily by regulation of HisG enzymatic activity. In Leptothrix cholodnii (strain ATCC 51168 / LMG 8142 / SP-6) (Leptothrix discophora (strain SP-6)), this protein is ATP phosphoribosyltransferase.